The chain runs to 351 residues: Holliday junction branch migration complex subunit RuvB (351 aa).

The tract at residues 1 to 22 (MSDPKANRMVSPERRSDDVGDT) is disordered. A large ATPase domain (RuvB-L) region spans residues 2–185 (SDPKANRMVS…FGIPVRLNFY (184 aa)). ATP contacts are provided by residues Leu-24, Arg-25, Gly-66, Lys-69, Thr-70, Thr-71, 132–134 (EDF), Arg-175, Tyr-185, and Arg-222. Position 70 (Thr-70) interacts with Mg(2+). A small ATPAse domain (RuvB-S) region spans residues 186 to 256 (TIEELESIVS…IADHALSALE (71 aa)). Residues 259 to 351 (AAGLDAMDRR…GLFGTDESDD (93 aa)) are head domain (RuvB-H). Residues Arg-295, Arg-314, and Arg-319 each coordinate DNA.

Belongs to the RuvB family. Homohexamer. Forms an RuvA(8)-RuvB(12)-Holliday junction (HJ) complex. HJ DNA is sandwiched between 2 RuvA tetramers; dsDNA enters through RuvA and exits via RuvB. An RuvB hexamer assembles on each DNA strand where it exits the tetramer. Each RuvB hexamer is contacted by two RuvA subunits (via domain III) on 2 adjacent RuvB subunits; this complex drives branch migration. In the full resolvosome a probable DNA-RuvA(4)-RuvB(12)-RuvC(2) complex forms which resolves the HJ.

Its subcellular location is the cytoplasm. The enzyme catalyses ATP + H2O = ADP + phosphate + H(+). The RuvA-RuvB-RuvC complex processes Holliday junction (HJ) DNA during genetic recombination and DNA repair, while the RuvA-RuvB complex plays an important role in the rescue of blocked DNA replication forks via replication fork reversal (RFR). RuvA specifically binds to HJ cruciform DNA, conferring on it an open structure. The RuvB hexamer acts as an ATP-dependent pump, pulling dsDNA into and through the RuvAB complex. RuvB forms 2 homohexamers on either side of HJ DNA bound by 1 or 2 RuvA tetramers; 4 subunits per hexamer contact DNA at a time. Coordinated motions by a converter formed by DNA-disengaged RuvB subunits stimulates ATP hydrolysis and nucleotide exchange. Immobilization of the converter enables RuvB to convert the ATP-contained energy into a lever motion, pulling 2 nucleotides of DNA out of the RuvA tetramer per ATP hydrolyzed, thus driving DNA branch migration. The RuvB motors rotate together with the DNA substrate, which together with the progressing nucleotide cycle form the mechanistic basis for DNA recombination by continuous HJ branch migration. Branch migration allows RuvC to scan DNA until it finds its consensus sequence, where it cleaves and resolves cruciform DNA. The protein is Holliday junction branch migration complex subunit RuvB of Bradyrhizobium diazoefficiens (strain JCM 10833 / BCRC 13528 / IAM 13628 / NBRC 14792 / USDA 110).